The primary structure comprises 723 residues: Enolase-phosphatase E1 (723 aa).

Substrate-binding positions include 126–127 (SS) and lysine 160. Residues 239-723 (GAGAKRKIDE…TPTPPIEAES (485 aa)) form a disordered region. Basic and acidic residues-rich tracts occupy residues 262–284 (VKKD…DEPA) and 293–308 (AAKE…KMEV). Positions 311-320 (AAAAAAPPAD) are enriched in low complexity. Basic and acidic residues-rich tracts occupy residues 322–406 (AEEK…VVEE), 419–443 (AEEK…KPAE), 468–479 (EPAKEKPAEAEA), 487–496 (TKAEVVEKPA), 511–565 (SADK…KGEE), and 577–593 (VEAK…KSDA). Low complexity-rich tracts occupy residues 596–606 (VSTTTTTTSTE) and 636–647 (NGEAEPAAEAVV). Positions 653 to 666 (GKHEEKGDSDKEND) are enriched in basic and acidic residues.

This sequence belongs to the HAD-like hydrolase superfamily. MasA/MtnC family. As to quaternary structure, monomer.

The protein resides in the cytoplasm. It localises to the nucleus. It catalyses the reaction 5-methylsulfanyl-2,3-dioxopentyl phosphate + H2O = 1,2-dihydroxy-5-(methylsulfanyl)pent-1-en-3-one + phosphate. The protein operates within amino-acid biosynthesis; L-methionine biosynthesis via salvage pathway; L-methionine from S-methyl-5-thio-alpha-D-ribose 1-phosphate: step 3/6. Its pathway is amino-acid biosynthesis; L-methionine biosynthesis via salvage pathway; L-methionine from S-methyl-5-thio-alpha-D-ribose 1-phosphate: step 4/6. In terms of biological role, bifunctional enzyme that catalyzes the enolization of 2,3-diketo-5-methylthiopentyl-1-phosphate (DK-MTP-1-P) into the intermediate 2-hydroxy-3-keto-5-methylthiopentenyl-1-phosphate (HK-MTPenyl-1-P), which is then dephosphorylated to form the acireductone 1,2-dihydroxy-3-keto-5-methylthiopentene (DHK-MTPene). In Culex quinquefasciatus (Southern house mosquito), this protein is Enolase-phosphatase E1.